We begin with the raw amino-acid sequence, 236 residues long: Probable calcium-binding protein CML30 (236 aa).

The interval 43 to 64 (VVVVAKKRPEEEPRRPDPDADL) is disordered. Residues 49 to 60 (KRPEEEPRRPDP) show a composition bias toward basic and acidic residues. 2 EF-hand domains span residues 59–94 (DPDA…LGIA) and 96–131 (SSAA…IPKR). Residues aspartate 72, aspartate 74, aspartate 76, glutamate 83, aspartate 109, asparagine 111, aspartate 113, and glutamate 120 each coordinate Ca(2+). The disordered stretch occupies residues 130–158 (KRRKSHQQHPLPSTAAADEEAAAADEEYE). A compositionally biased stretch (acidic residues) spans 146-158 (ADEEAAAADEEYE). EF-hand domains follow at residues 161–196 (EEER…LGLR) and 202–236 (PAVA…VVKA). The Ca(2+) site is built by aspartate 174, asparagine 176, aspartate 178, glutamate 185, aspartate 215, aspartate 217, aspartate 219, methionine 221, and glutamate 226.

In terms of biological role, potential calcium sensor. The protein is Probable calcium-binding protein CML30 (CML30) of Oryza sativa subsp. japonica (Rice).